The following is a 611-amino-acid chain: Autophagy-related protein 22-2 (611 aa).

A disordered region spans residues Met-1 to Thr-24. The helical transmembrane segment at Tyr-35 to Leu-55 threads the bilayer. The N-linked (GlcNAc...) asparagine glycan is linked to Asn-78. 3 helical membrane passes run Thr-116–Ile-136, Leu-151–Pro-171, and Ile-175–Leu-195. Asn-221 carries N-linked (GlcNAc...) asparagine glycosylation. The next 2 membrane-spanning stretches (helical) occupy residues Ile-286–Ala-306 and Leu-316–Leu-336. Asn-353 carries an N-linked (GlcNAc...) asparagine glycan. The next 6 membrane-spanning stretches (helical) occupy residues Ile-380 to Thr-400, Ala-414 to Trp-434, Ile-449 to Pro-469, Trp-483 to Cys-503, Ala-521 to Ile-541, and Ala-551 to Val-571.

Belongs to the ATG22 family.

The protein resides in the vacuole membrane. Vacuolar effluxer which mediate the efflux of amino acids resulting from autophagic degradation. The release of autophagic amino acids allows the maintenance of protein synthesis and viability during nitrogen starvation. In Aspergillus clavatus (strain ATCC 1007 / CBS 513.65 / DSM 816 / NCTC 3887 / NRRL 1 / QM 1276 / 107), this protein is Autophagy-related protein 22-2 (atg22-2).